The sequence spans 183 residues: Peptide deformylase (183 aa).

Cysteine 110 and histidine 153 together coordinate Fe cation. Glutamate 154 is an active-site residue. Histidine 157 contacts Fe cation.

This sequence belongs to the polypeptide deformylase family. Fe(2+) is required as a cofactor.

It catalyses the reaction N-terminal N-formyl-L-methionyl-[peptide] + H2O = N-terminal L-methionyl-[peptide] + formate. In terms of biological role, removes the formyl group from the N-terminal Met of newly synthesized proteins. Requires at least a dipeptide for an efficient rate of reaction. N-terminal L-methionine is a prerequisite for activity but the enzyme has broad specificity at other positions. In Listeria monocytogenes serovar 1/2a (strain ATCC BAA-679 / EGD-e), this protein is Peptide deformylase.